The chain runs to 389 residues: Tyrosine aminotransferase (389 aa).

Lys242 carries the post-translational modification N6-(pyridoxal phosphate)lysine.

It belongs to the class-I pyridoxal-phosphate-dependent aminotransferase family. Homodimer. Pyridoxal 5'-phosphate is required as a cofactor.

It carries out the reaction L-tyrosine + 2-oxoglutarate = 3-(4-hydroxyphenyl)pyruvate + L-glutamate. It participates in amino-acid degradation; L-phenylalanine degradation; acetoacetate and fumarate from L-phenylalanine: step 2/6. In terms of biological role, transaminase involved in tyrosine breakdown. Converts tyrosine to p-hydroxyphenylpyruvate. This Rhizobium meliloti (strain 1021) (Ensifer meliloti) protein is Tyrosine aminotransferase (tatA).